A 166-amino-acid chain; its full sequence is Putative tRNA (cytidine(34)-2'-O)-methyltransferase (166 aa).

Positions 83, 109, 130, and 138 each coordinate S-adenosyl-L-methionine.

The protein belongs to the class IV-like SAM-binding methyltransferase superfamily. RNA methyltransferase TrmH family. TrmL subfamily.

It localises to the cytoplasm. The enzyme catalyses cytidine(34) in tRNA + S-adenosyl-L-methionine = 2'-O-methylcytidine(34) in tRNA + S-adenosyl-L-homocysteine + H(+). It carries out the reaction 5-carboxymethylaminomethyluridine(34) in tRNA(Leu) + S-adenosyl-L-methionine = 5-carboxymethylaminomethyl-2'-O-methyluridine(34) in tRNA(Leu) + S-adenosyl-L-homocysteine + H(+). In terms of biological role, could methylate the ribose at the nucleotide 34 wobble position in tRNA. This is Putative tRNA (cytidine(34)-2'-O)-methyltransferase from Mycoplasma pneumoniae (strain ATCC 29342 / M129 / Subtype 1) (Mycoplasmoides pneumoniae).